The chain runs to 218 residues: Pyridoxine/pyridoxamine 5'-phosphate oxidase (218 aa).

Substrate is bound by residues 14 to 17 (RREY) and Lys72. FMN is bound by residues 67 to 72 (RIVLLK), 82 to 83 (YT), Arg88, Lys89, and Gln111. Residues Tyr129, Arg133, and Ser137 each contribute to the substrate site. FMN is bound by residues 146–147 (QS) and Trp191. A substrate-binding site is contributed by 197–199 (RLH). Arg201 lines the FMN pocket.

The protein belongs to the pyridoxamine 5'-phosphate oxidase family. In terms of assembly, homodimer. The cofactor is FMN.

It carries out the reaction pyridoxamine 5'-phosphate + O2 + H2O = pyridoxal 5'-phosphate + H2O2 + NH4(+). The enzyme catalyses pyridoxine 5'-phosphate + O2 = pyridoxal 5'-phosphate + H2O2. It participates in cofactor metabolism; pyridoxal 5'-phosphate salvage; pyridoxal 5'-phosphate from pyridoxamine 5'-phosphate: step 1/1. It functions in the pathway cofactor metabolism; pyridoxal 5'-phosphate salvage; pyridoxal 5'-phosphate from pyridoxine 5'-phosphate: step 1/1. Catalyzes the oxidation of either pyridoxine 5'-phosphate (PNP) or pyridoxamine 5'-phosphate (PMP) into pyridoxal 5'-phosphate (PLP). This chain is Pyridoxine/pyridoxamine 5'-phosphate oxidase, found in Escherichia fergusonii (strain ATCC 35469 / DSM 13698 / CCUG 18766 / IAM 14443 / JCM 21226 / LMG 7866 / NBRC 102419 / NCTC 12128 / CDC 0568-73).